The following is a 374-amino-acid chain: Peptide chain release factor 2 (374 aa).

Position 250 is an N5-methylglutamine (Q250).

It belongs to the prokaryotic/mitochondrial release factor family. Methylated by PrmC. Methylation increases the termination efficiency of RF2.

It localises to the cytoplasm. In terms of biological role, peptide chain release factor 2 directs the termination of translation in response to the peptide chain termination codons UGA and UAA. This is Peptide chain release factor 2 from Beutenbergia cavernae (strain ATCC BAA-8 / DSM 12333 / CCUG 43141 / JCM 11478 / NBRC 16432 / NCIMB 13614 / HKI 0122).